We begin with the raw amino-acid sequence, 485 residues long: Protein nucleotidyltransferase YdiU (485 aa).

ATP is bound by residues Gly100, Gly102, Arg103, Lys123, Asp135, Gly136, Arg189, and Arg196. The active-site Proton acceptor is Asp265. The Mg(2+) site is built by Asn266 and Asp275. ATP is bound at residue Asp275.

Belongs to the SELO family. The cofactor is Mg(2+). Mn(2+) is required as a cofactor.

The catalysed reaction is L-seryl-[protein] + ATP = 3-O-(5'-adenylyl)-L-seryl-[protein] + diphosphate. It catalyses the reaction L-threonyl-[protein] + ATP = 3-O-(5'-adenylyl)-L-threonyl-[protein] + diphosphate. The enzyme catalyses L-tyrosyl-[protein] + ATP = O-(5'-adenylyl)-L-tyrosyl-[protein] + diphosphate. It carries out the reaction L-histidyl-[protein] + UTP = N(tele)-(5'-uridylyl)-L-histidyl-[protein] + diphosphate. The catalysed reaction is L-seryl-[protein] + UTP = O-(5'-uridylyl)-L-seryl-[protein] + diphosphate. It catalyses the reaction L-tyrosyl-[protein] + UTP = O-(5'-uridylyl)-L-tyrosyl-[protein] + diphosphate. Functionally, nucleotidyltransferase involved in the post-translational modification of proteins. It can catalyze the addition of adenosine monophosphate (AMP) or uridine monophosphate (UMP) to a protein, resulting in modifications known as AMPylation and UMPylation. This chain is Protein nucleotidyltransferase YdiU, found in Trichormus variabilis (strain ATCC 29413 / PCC 7937) (Anabaena variabilis).